A 75-amino-acid chain; its full sequence is Small capsomere-interacting protein (75 aa).

It belongs to the herpesviridae small capsomere-interacting protein family. In terms of assembly, interacts with the major capsid protein/MCP.

It is found in the virion. The protein localises to the host nucleus. Its function is as follows. Participates in the assembly of the infectious particles by decorating the outer surface of the capsid shell and thus forming a layer between the capsid and the tegument. Complexes composed of the capsid protein VP5 and UL48A assemble together in the host cytoplasm and are translocated to the nucleus, where they accumulate and participate in capsid assembly. Functionally, participates in the assembly of the infectious particles by decorating the outer surface of the capsid shell and thus forming a layer between the capsid and the tegument. Complexes composed of the major capsid protein and small capsomere-interacting protein/SCP assemble together in the host cytoplasm and are translocated to the nucleus, where they accumulate and participate in capsid assembly. The chain is Small capsomere-interacting protein from Homo sapiens (Human).